The primary structure comprises 339 residues: Heat-inducible transcription repressor HrcA (339 aa).

Belongs to the HrcA family.

Functionally, negative regulator of class I heat shock genes (grpE-dnaK-dnaJ and groELS operons). Prevents heat-shock induction of these operons. In Thermotoga neapolitana (strain ATCC 49049 / DSM 4359 / NBRC 107923 / NS-E), this protein is Heat-inducible transcription repressor HrcA.